We begin with the raw amino-acid sequence, 118 residues long: Beta-2-microglobulin (118 aa).

Residues methionine 1–alanine 20 form the signal peptide. One can recognise an Ig-like C1-type domain in the interval proline 25–valine 112. A disulfide bridge connects residues cysteine 45 and cysteine 99.

The protein belongs to the beta-2-microglobulin family. Heterodimer of an alpha chain and a beta chain. Beta-2-microglobulin is the beta-chain of major histocompatibility complex class I molecules.

The protein resides in the secreted. Functionally, component of the class I major histocompatibility complex (MHC). Involved in the presentation of peptide antigens to the immune system. In Ovis aries (Sheep), this protein is Beta-2-microglobulin (B2M).